The following is a 359-amino-acid chain: UbiA prenyltransferase domain-containing protein 1 homolog (359 aa).

Residues M1–N16 are compositionally biased toward polar residues. Residues M1–D23 form a disordered region. 8 helical membrane-spanning segments follow: residues A67–R89, L98–V118, V148–V168, L177–F197, I200–F220, I262–A284, F289–F311, and F335–G355.

This sequence belongs to the UbiA prenyltransferase family.

It is found in the mitochondrion membrane. The protein operates within quinol/quinone metabolism; menaquinone biosynthesis. Functionally, prenyltransferase that mediates the formation of menaquinone-4 (MK-4), a vitamin K2 isoform, thereby acting as a mitochondrial electron carrier. Mediates the conversion of phylloquinone (PK) into MK-4, probably by cleaving the side chain of phylloquinone (PK) to release 2-methyl-1,4-naphthoquinone (menadione; K3) and then prenylating it with geranylgeranyl pyrophosphate (GGPP) to form MK-4. MK-4 acts as a membrane electron carrier downstream of a electron transport chain complex, improving mitochondrial oxygen consumption. The sequence is that of UbiA prenyltransferase domain-containing protein 1 homolog (heix) from Drosophila melanogaster (Fruit fly).